The chain runs to 311 residues: tRNA-cytidine(32) 2-sulfurtransferase (311 aa).

Residues 47-52 carry the PP-loop motif motif; the sequence is SGGKDS. Positions 122, 125, and 213 each coordinate [4Fe-4S] cluster.

The protein belongs to the TtcA family. As to quaternary structure, homodimer. Requires Mg(2+) as cofactor. The cofactor is [4Fe-4S] cluster.

The protein localises to the cytoplasm. It carries out the reaction cytidine(32) in tRNA + S-sulfanyl-L-cysteinyl-[cysteine desulfurase] + AH2 + ATP = 2-thiocytidine(32) in tRNA + L-cysteinyl-[cysteine desulfurase] + A + AMP + diphosphate + H(+). It functions in the pathway tRNA modification. In terms of biological role, catalyzes the ATP-dependent 2-thiolation of cytidine in position 32 of tRNA, to form 2-thiocytidine (s(2)C32). The sulfur atoms are provided by the cysteine/cysteine desulfurase (IscS) system. The protein is tRNA-cytidine(32) 2-sulfurtransferase of Escherichia coli O127:H6 (strain E2348/69 / EPEC).